Here is a 351-residue protein sequence, read N- to C-terminus: Ribosomal RNA small subunit methyltransferase H (351 aa).

Residues 48 to 50 (GGY), Asp67, Phe94, Asp115, and Gln122 contribute to the S-adenosyl-L-methionine site. Residues 274–351 (AAQASRHVPG…PAPQGRGPRR (78 aa)) are disordered.

It belongs to the methyltransferase superfamily. RsmH family.

Its subcellular location is the cytoplasm. It carries out the reaction cytidine(1402) in 16S rRNA + S-adenosyl-L-methionine = N(4)-methylcytidine(1402) in 16S rRNA + S-adenosyl-L-homocysteine + H(+). Functionally, specifically methylates the N4 position of cytidine in position 1402 (C1402) of 16S rRNA. The polypeptide is Ribosomal RNA small subunit methyltransferase H (Methylorubrum extorquens (strain ATCC 14718 / DSM 1338 / JCM 2805 / NCIMB 9133 / AM1) (Methylobacterium extorquens)).